The sequence spans 419 residues: Zinc finger protein Pegasus (419 aa).

Lys5 is covalently cross-linked (Glycyl lysine isopeptide (Lys-Gly) (interchain with G-Cter in SUMO2)). 3 C2H2-type zinc fingers span residues 82 to 104 (LKCR…IRIH), 110 to 132 (HRCH…MRSH), and 138 to 161 (YKCE…RRKH). A Glycyl lysine isopeptide (Lys-Gly) (interchain with G-Cter in SUMO2) cross-link involves residue Lys185. Composition is skewed to polar residues over residues 223-236 (QTDS…TTPT) and 262-273 (LSSLPPENQNPA). Disordered stretches follow at residues 223–247 (QTDS…QELM) and 262–356 (LSSL…PALP). Residues 290-311 (QPSTQAVVSAVSASIPQSSSPT) are compositionally biased toward low complexity. Residues 332–349 (SEPSAHTSTPSIGNSQPS) show a composition bias toward polar residues. 2 C2H2-type zinc fingers span residues 364–386 (HHCQ…MGCH) and 392–416 (FQCN…RGQH).

It belongs to the Ikaros C2H2-type zinc-finger protein family. Self-associates. Interacts with other family members; IKZF1, IKZF2, IKZF3 and IKZF4. In terms of tissue distribution, expressed in brain, heart, skeletal muscle, kidney, and liver. Expressed in the hematopoietic cell lines MOLT-4, NALM-6 and K-562. Highly expressed in THP-1 and M-07e cell lines, which have characteristics of myeloid and early megakaryocytic cells respectively.

Its subcellular location is the nucleus. Its function is as follows. Transcriptional repressor that binds the core 5'GNNTGTNG-3' DNA consensus sequence. Involved in megakaryocyte differentiation. In Homo sapiens (Human), this protein is Zinc finger protein Pegasus (IKZF5).